Reading from the N-terminus, the 580-residue chain is Arginine--tRNA ligase (580 aa).

Residues 131–141 (ANPTGPMHVGH) carry the 'HIGH' region motif.

This sequence belongs to the class-I aminoacyl-tRNA synthetase family. Monomer.

It localises to the cytoplasm. The catalysed reaction is tRNA(Arg) + L-arginine + ATP = L-arginyl-tRNA(Arg) + AMP + diphosphate. The polypeptide is Arginine--tRNA ligase (Cereibacter sphaeroides (strain ATCC 17025 / ATH 2.4.3) (Rhodobacter sphaeroides)).